Reading from the N-terminus, the 790-residue chain is Eukaryotic translation initiation factor 3 subunit C (790 aa).

The segment at 1-62 (MSRFFVSGYN…DGRPSGPAYF (62 aa)) is disordered. The segment covering 14–53 (SSEEEDLLSSEEELLTSSGEENEDSDFFNDDDESSSDEED) has biased composition (acidic residues). A PCI domain is found at 556–728 (FHQHINLELL…IVFTTDSQRS (173 aa)). Residues 748 to 790 (NEKTSSNGYAKKNQSQTQPQAQSKEVEENKFRYANVNTNTDEF) form a disordered region. Residues 751 to 770 (TSSNGYAKKNQSQTQPQAQS) show a composition bias toward polar residues.

The protein belongs to the eIF-3 subunit C family. Component of the eukaryotic translation initiation factor 3 (eIF-3) complex.

It is found in the cytoplasm. In terms of biological role, component of the eukaryotic translation initiation factor 3 (eIF-3) complex, which is involved in protein synthesis of a specialized repertoire of mRNAs and, together with other initiation factors, stimulates binding of mRNA and methionyl-tRNAi to the 40S ribosome. The eIF-3 complex specifically targets and initiates translation of a subset of mRNAs involved in cell proliferation. This Lodderomyces elongisporus (strain ATCC 11503 / CBS 2605 / JCM 1781 / NBRC 1676 / NRRL YB-4239) (Yeast) protein is Eukaryotic translation initiation factor 3 subunit C.